A 395-amino-acid chain; its full sequence is HCLS1-binding protein 3 (395 aa).

Met-1 carries the N-acetylmethionine modification. Ser-3 carries the phosphoserine modification. The region spanning 19–142 (GLDLSVPQHQ…EFLGTRAPGA (124 aa)) is the PX domain. Disordered regions lie at residues 143 to 310 (TGLA…KELF) and 322 to 374 (LGSE…AMDE). A compositionally biased stretch (acidic residues) spans 162 to 174 (DSDEAFDFFEQQD). Position 191 is a phosphoserine (Ser-191). A compositionally biased stretch (acidic residues) spans 194 to 206 (GEEEEEEEEEEVL). Basic and acidic residues-rich tracts occupy residues 249–260 (SDKKVSETRRPL) and 299–310 (RPEHGDASKELF). The residue at position 254 (Ser-254) is a Phosphoserine. The segment covering 329–339 (KPQTKPKPLVP) has biased composition (pro residues). N6-acetyllysine is present on Lys-341.

Binds HCLS1. Interacts with the SH3 domain of HCLS1 in vitro. Ubiquitously expressed.

Its function is as follows. May be a modulator of IL-2 signaling. The polypeptide is HCLS1-binding protein 3 (Hs1bp3) (Mus musculus (Mouse)).